Consider the following 185-residue polypeptide: Ribosome-recycling factor (185 aa).

This sequence belongs to the RRF family.

Its subcellular location is the cytoplasm. In terms of biological role, responsible for the release of ribosomes from messenger RNA at the termination of protein biosynthesis. May increase the efficiency of translation by recycling ribosomes from one round of translation to another. In Aliivibrio fischeri (strain ATCC 700601 / ES114) (Vibrio fischeri), this protein is Ribosome-recycling factor.